We begin with the raw amino-acid sequence, 307 residues long: Fructokinase (307 aa).

Belongs to the carbohydrate kinase PfkB family.

It carries out the reaction D-fructose + ATP = D-fructose 6-phosphate + ADP + H(+). In terms of biological role, involved in sucrose metabolism. In Klebsiella pneumoniae, this protein is Fructokinase (scrK).